A 304-amino-acid polypeptide reads, in one-letter code: N-acetylmuramic acid 6-phosphate etherase (304 aa).

Positions 60–221 (GVSVLRHGGR…STAVMVRLGY (162 aa)) constitute an SIS domain. Catalysis depends on glutamate 88, which acts as the Proton donor. Glutamate 119 is an active-site residue.

The protein belongs to the GCKR-like family. MurNAc-6-P etherase subfamily. Homodimer.

It carries out the reaction N-acetyl-D-muramate 6-phosphate + H2O = N-acetyl-D-glucosamine 6-phosphate + (R)-lactate. Its pathway is amino-sugar metabolism; N-acetylmuramate degradation. In terms of biological role, specifically catalyzes the cleavage of the D-lactyl ether substituent of MurNAc 6-phosphate, producing GlcNAc 6-phosphate and D-lactate. This chain is N-acetylmuramic acid 6-phosphate etherase, found in Thermobifida fusca (strain YX).